A 574-amino-acid chain; its full sequence is Alpha-farnesene synthase (574 aa).

The Mn(2+) site is built by D326, D330, and E478. The short motif at 326 to 330 (DDIYD) is the DDXXD motif element.

This sequence belongs to the terpene synthase family. Tpsd subfamily. Requires Mn(2+) as cofactor.

Its subcellular location is the cytoplasm. It catalyses the reaction (2E,6E)-farnesyl diphosphate = (3E,6E)-alpha-farnesene + diphosphate. The protein operates within terpene metabolism; oleoresin biosynthesis. Its function is as follows. Involved in sesquiterpene (C15) biosynthesis. The major product is alpha-farnesene. This Pinus taeda (Loblolly pine) protein is Alpha-farnesene synthase (PT5).